We begin with the raw amino-acid sequence, 460 residues long: Hydroxymethylglutaryl-CoA synthase MYCGRDRAFT_54740 (460 aa).

Alanine 35 contacts (3S)-3-hydroxy-3-methylglutaryl-CoA. Residue glutamate 86 is the Proton donor/acceptor of the active site. (3S)-3-hydroxy-3-methylglutaryl-CoA-binding residues include cysteine 120, asparagine 158, threonine 162, serine 212, histidine 262, lysine 271, asparagine 339, and serine 373. The active-site Acyl-thioester intermediate is cysteine 120. Histidine 262 serves as the catalytic Proton donor/acceptor.

This sequence belongs to the thiolase-like superfamily. HMG-CoA synthase family.

It catalyses the reaction acetoacetyl-CoA + acetyl-CoA + H2O = (3S)-3-hydroxy-3-methylglutaryl-CoA + CoA + H(+). Its pathway is siderophore biosynthesis. Hydroxymethylglutaryl-CoA synthase involved in the biosynthesis of a ferrichrome A-like siderophors which may contribute to organismal virulence. The first step of siderophore biosynthesis is performed by the HMG-CoA synthase (HMGS) MYCGRDRAFT_54740 which catalyzes the generation of HMG-CoA and CoA using acetoacetyl-CoA and acetyl-CoA as substrates. The enoyl-CoA isomerase/hydratase MYCGRDRAFT_76805 then catalyzes the conversion of HMG-CoA to methylglutaconyl-CoA. The acyltransferase MYCGRDRAFT_85486 then fuses methylglutaconyl-CoA with hydroxyornithine to yield methylglutaconyl hydroxyornithine. Methylglutaconyl hydroxyornithine is then available for use by the nonribosomal peptide synthetase NRPS2 to generate the ferrichrome A-like siderophore. The protein is Hydroxymethylglutaryl-CoA synthase MYCGRDRAFT_54740 (ERG13) of Zymoseptoria tritici (strain CBS 115943 / IPO323) (Speckled leaf blotch fungus).